A 127-amino-acid chain; its full sequence is Fluoride-specific ion channel FluC 1 (127 aa).

Helical transmembrane passes span Thr4–Leu24, Val35–Phe55, Thr71–Ile91, and Gly101–Val121. 2 residues coordinate Na(+): Gly75 and Thr78.

It belongs to the fluoride channel Fluc/FEX (TC 1.A.43) family.

It localises to the cell inner membrane. The enzyme catalyses fluoride(in) = fluoride(out). Its activity is regulated as follows. Na(+) is not transported, but it plays an essential structural role and its presence is essential for fluoride channel function. Its function is as follows. Fluoride-specific ion channel. Important for reducing fluoride concentration in the cell, thus reducing its toxicity. The protein is Fluoride-specific ion channel FluC 1 of Yersinia pestis.